Consider the following 419-residue polypeptide: 5-methylthioadenosine/S-adenosylhomocysteine deaminase (419 aa).

Positions 58 and 60 each coordinate Zn(2+). Residues Glu-87 and His-179 each contribute to the substrate site. His-206 serves as a coordination point for Zn(2+). Glu-209 and Asp-294 together coordinate substrate. A Zn(2+)-binding site is contributed by Asp-294.

The protein belongs to the metallo-dependent hydrolases superfamily. MTA/SAH deaminase family. Zn(2+) serves as cofactor.

The enzyme catalyses S-adenosyl-L-homocysteine + H2O + H(+) = S-inosyl-L-homocysteine + NH4(+). It carries out the reaction S-methyl-5'-thioadenosine + H2O + H(+) = S-methyl-5'-thioinosine + NH4(+). In terms of biological role, catalyzes the deamination of 5-methylthioadenosine and S-adenosyl-L-homocysteine into 5-methylthioinosine and S-inosyl-L-homocysteine, respectively. Is also able to deaminate adenosine. This chain is 5-methylthioadenosine/S-adenosylhomocysteine deaminase, found in Pyrococcus furiosus (strain ATCC 43587 / DSM 3638 / JCM 8422 / Vc1).